A 376-amino-acid chain; its full sequence is MAKRDYYEILGVERSADEREIKKAYKRLAMKFHPDRNPDNPESEEKFKEAKEAYEILSDAQKRAAYDKFGHAGVDPNQAGPGGFGGGADFGDVFGDIFGDIFGGGRRSQRAARGSDLRYNMELTLEEAVRGVSKEIKVPTLVECDECHGSGARTGTSAQTCPTCHGSGQVQMRQGFFAVTQACPHCHGKGKIITDPCRKCHGDGRVQKTKTLSVKIPAGVDTGDRIRLAGEGEAGEFGAPAGDLYVQVHVKEHPIFVRDGNNLYCEIPISFTTAALGGEVAVPTLDGRVMLKIPVETQTGRMFRLRGKGVRSLRSGAEGDLLCKAVVETPVKLSDEQKELLKQLEDSLNGSGVKTHKPKADGFFEGVKRFFDDLTG.

In terms of domain architecture, J spans 5–70 (DYYEILGVER…QKRAAYDKFG (66 aa)). Residues 131-209 (GVSKEIKVPT…CHGDGRVQKT (79 aa)) form a CR-type zinc finger. Residues C144, C147, C161, C164, C183, C186, C197, and C200 each contribute to the Zn(2+) site. 4 CXXCXGXG motif repeats span residues 144-151 (CDECHGSG), 161-168 (CPTCHGSG), 183-190 (CPHCHGKG), and 197-204 (CRKCHGDG).

It belongs to the DnaJ family. As to quaternary structure, homodimer. Zn(2+) is required as a cofactor.

Its subcellular location is the cytoplasm. In terms of biological role, participates actively in the response to hyperosmotic and heat shock by preventing the aggregation of stress-denatured proteins and by disaggregating proteins, also in an autonomous, DnaK-independent fashion. Unfolded proteins bind initially to DnaJ; upon interaction with the DnaJ-bound protein, DnaK hydrolyzes its bound ATP, resulting in the formation of a stable complex. GrpE releases ADP from DnaK; ATP binding to DnaK triggers the release of the substrate protein, thus completing the reaction cycle. Several rounds of ATP-dependent interactions between DnaJ, DnaK and GrpE are required for fully efficient folding. Also involved, together with DnaK and GrpE, in the DNA replication of plasmids through activation of initiation proteins. This Tolumonas auensis (strain DSM 9187 / NBRC 110442 / TA 4) protein is Chaperone protein DnaJ.